A 231-amino-acid polypeptide reads, in one-letter code: Large ribosomal subunit protein uL1 (231 aa).

The protein belongs to the universal ribosomal protein uL1 family. Part of the 50S ribosomal subunit.

Binds directly to 23S rRNA. The L1 stalk is quite mobile in the ribosome, and is involved in E site tRNA release. Its function is as follows. Protein L1 is also a translational repressor protein, it controls the translation of the L11 operon by binding to its mRNA. This is Large ribosomal subunit protein uL1 from Pseudomonas syringae pv. syringae (strain B728a).